Consider the following 498-residue polypeptide: Lysine--tRNA ligase (498 aa).

Mg(2+) contacts are provided by Glu-408 and Glu-415.

It belongs to the class-II aminoacyl-tRNA synthetase family. Homodimer. It depends on Mg(2+) as a cofactor.

The protein resides in the cytoplasm. The enzyme catalyses tRNA(Lys) + L-lysine + ATP = L-lysyl-tRNA(Lys) + AMP + diphosphate. In Pediococcus pentosaceus (strain ATCC 25745 / CCUG 21536 / LMG 10740 / 183-1w), this protein is Lysine--tRNA ligase.